We begin with the raw amino-acid sequence, 129 residues long: Phosphoribosyl-AMP cyclohydrolase (129 aa).

A Mg(2+)-binding site is contributed by Asp84. Position 85 (Cys85) interacts with Zn(2+). Positions 86 and 88 each coordinate Mg(2+). Residues Cys101 and Cys108 each contribute to the Zn(2+) site.

This sequence belongs to the PRA-CH family. In terms of assembly, homodimer. The cofactor is Mg(2+). Requires Zn(2+) as cofactor.

The protein resides in the cytoplasm. The enzyme catalyses 1-(5-phospho-beta-D-ribosyl)-5'-AMP + H2O = 1-(5-phospho-beta-D-ribosyl)-5-[(5-phospho-beta-D-ribosylamino)methylideneamino]imidazole-4-carboxamide. It participates in amino-acid biosynthesis; L-histidine biosynthesis; L-histidine from 5-phospho-alpha-D-ribose 1-diphosphate: step 3/9. Functionally, catalyzes the hydrolysis of the adenine ring of phosphoribosyl-AMP. This chain is Phosphoribosyl-AMP cyclohydrolase, found in Halobacterium salinarum (strain ATCC 700922 / JCM 11081 / NRC-1) (Halobacterium halobium).